The sequence spans 360 residues: MLMLLVALADEFSVLNVFRYITFRTGGALITAAFIVFLFGPAIISSLRLRQGKGQPIRADGPQTHFKKAGTPTMGGLMIFSGILGSSILWGNLSSVYVWVVLMVMVGFGAIGFYDDYLKVTKQSHLGFSGKSRLALEFVIAGFAAWIIMSAGQEPFSSSLTFPFFKELLLNLGIFFIPFAAFVIVGAGNAVNLTDGLDGLATVPVMVAAASFGVIAYLSGNAIFADYLQIHFVPGTGELSVILGAVIGAGLGFLWFNAPPAAIFMGDTGSLALGGLIGTVAVATKHEIVLAIIGGLFVIEILSVIIQVAVFKMTGKRVFLMAPIHHHFEKLGWTESQVVIRFWIIAVVLALIGLSTLKLR.

A run of 10 helical transmembrane segments spans residues 27–47 (GALITAAFIVFLFGPAIISSL), 70–90 (GTPTMGGLMIFSGILGSSILW), 93–113 (LSSVYVWVVLMVMVGFGAIGF), 134–154 (LALEFVIAGFAAWIIMSAGQE), 168–188 (LLLNLGIFFIPFAAFVIVGAG), 205–225 (VMVAAASFGVIAYLSGNAIFA), 239–259 (LSVILGAVIGAGLGFLWFNAP), 262–282 (AIFMGDTGSLALGGLIGTVAV), 288–308 (IVLAIIGGLFVIEILSVIIQV), and 337–357 (QVVIRFWIIAVVLALIGLSTL).

The protein belongs to the glycosyltransferase 4 family. MraY subfamily. Mg(2+) serves as cofactor.

The protein localises to the cell inner membrane. The catalysed reaction is UDP-N-acetyl-alpha-D-muramoyl-L-alanyl-gamma-D-glutamyl-meso-2,6-diaminopimeloyl-D-alanyl-D-alanine + di-trans,octa-cis-undecaprenyl phosphate = di-trans,octa-cis-undecaprenyl diphospho-N-acetyl-alpha-D-muramoyl-L-alanyl-D-glutamyl-meso-2,6-diaminopimeloyl-D-alanyl-D-alanine + UMP. It participates in cell wall biogenesis; peptidoglycan biosynthesis. Functionally, catalyzes the initial step of the lipid cycle reactions in the biosynthesis of the cell wall peptidoglycan: transfers peptidoglycan precursor phospho-MurNAc-pentapeptide from UDP-MurNAc-pentapeptide onto the lipid carrier undecaprenyl phosphate, yielding undecaprenyl-pyrophosphoryl-MurNAc-pentapeptide, known as lipid I. This chain is Phospho-N-acetylmuramoyl-pentapeptide-transferase, found in Chelativorans sp. (strain BNC1).